The chain runs to 309 residues: Transcription elongation factor S-II (309 aa).

Residues 5–79 (EVLVHVKNLE…SSWKDAINKN (75 aa)) form the TFIIS N-terminal domain. Positions 78–142 (KNKRSRQAQQ…NSKNDGVDTA (65 aa)) are disordered. Over residues 88-102 (HHQDHAPGNAEDKTT) the composition is skewed to basic and acidic residues. Polar residues predominate over residues 103-120 (VGESVNGVQQPASSQSDA). A Phosphoserine modification is found at S116. A TFIIS central domain is found at 148–264 (LRDQVLKALY…NAQGATIERS (117 aa)). Residues 267-307 (DRFTCGKCKEKKVSYYQLQTRSADEPLTTFCTCEACGNRWK) form a TFIIS-type zinc finger. The Zn(2+) site is built by C271, C274, C299, and C302.

It belongs to the TFS-II family.

The protein localises to the nucleus. Its function is as follows. Necessary for efficient RNA polymerase II transcription elongation past template-encoded arresting sites. The arresting sites in DNA have the property of trapping a certain fraction of elongating RNA polymerases that pass through, resulting in locked ternary complexes. Cleavage of the nascent transcript by S-II allows the resumption of elongation from the new 3'-terminus. Functionally, can promote the transfer of one strand of a double-stranded DNA molecule to a homologous single strand and thus may be involved in recombination. The sequence is that of Transcription elongation factor S-II (DST1) from Saccharomyces cerevisiae (strain ATCC 204508 / S288c) (Baker's yeast).